The primary structure comprises 498 residues: POU domain protein 2, isoform A (498 aa).

The span at 1–30 shows a compositional bias: low complexity; it reads MMVLQQQQQQRLWDATTTSNTNTQTQQSAN. Positions 1–35 are disordered; the sequence is MMVLQQQQQQRLWDATTTSNTNTQTQQSANVESTP. Residues Ser72, Ser211, Ser215, Ser217, and Ser219 each carry the phosphoserine modification. A disordered region spans residues 191–273; it reads QMKQQQREDP…STPKPTSGLT (83 aa). A compositionally biased stretch (low complexity) spans 207-222; the sequence is PLAKSPLRSPSLSPVP. The span at 228–251 shows a compositional bias: polar residues; the sequence is QQRTPPNSMTANSLGMSSAVMTPN. Over residues 252-270 the composition is skewed to low complexity; that stretch reads TPSMQQQPQLQQSTPKPTS. Residues 286 to 360 enclose the POU-specific domain; the sequence is EETTDLEELE…LLQKWLEDAD (75 aa). The homeobox DNA-binding region spans 391-450; that stretch reads RRKKRTSIETTVRTTLEKAFLMNCKPTSEEISQLSERLNMDKEVIRVWFCNRRQKEKRIN.

It belongs to the POU transcription factor family. Class-2 subfamily. As to expression, initial expression in cellular blastoderm stage, then in ectodermal stripes during germband extension. Broad expression in the neuroectoderm followed by limitation to discrete subsets of CNS cells, and expression in specific PNS neurons and support cells.

Its subcellular location is the nucleus. DNA-binding regulatory protein implicated in early development. Involved in neuronal cell fate decision. May act as an octamer-dependent activator of transcription. Could also play an early role in specific ectodermal cells, and a subsequent role in the embryonic nervous system. The polypeptide is POU domain protein 2, isoform A (pdm2) (Drosophila melanogaster (Fruit fly)).